We begin with the raw amino-acid sequence, 247 residues long: NAD(P)H-quinone oxidoreductase subunit K, chloroplastic (247 aa).

4 residues coordinate [4Fe-4S] cluster: Cys-61, Cys-62, Cys-126, and Cys-157.

It belongs to the complex I 20 kDa subunit family. In terms of assembly, NDH is composed of at least 16 different subunits, 5 of which are encoded in the nucleus. [4Fe-4S] cluster is required as a cofactor.

The protein localises to the plastid. Its subcellular location is the chloroplast thylakoid membrane. The catalysed reaction is a plastoquinone + NADH + (n+1) H(+)(in) = a plastoquinol + NAD(+) + n H(+)(out). The enzyme catalyses a plastoquinone + NADPH + (n+1) H(+)(in) = a plastoquinol + NADP(+) + n H(+)(out). Its function is as follows. NDH shuttles electrons from NAD(P)H:plastoquinone, via FMN and iron-sulfur (Fe-S) centers, to quinones in the photosynthetic chain and possibly in a chloroplast respiratory chain. The immediate electron acceptor for the enzyme in this species is believed to be plastoquinone. Couples the redox reaction to proton translocation, and thus conserves the redox energy in a proton gradient. The sequence is that of NAD(P)H-quinone oxidoreductase subunit K, chloroplastic from Anthoceros angustus (Hornwort).